The following is a 332-amino-acid chain: rRNA biogenesis protein rrp-36 (332 aa).

Disordered stretches follow at residues 1 to 91 (MPAV…ASQL), 104 to 196 (GALK…SGKS), 243 to 262 (SMESKKKARARKDKERELLS), and 312 to 332 (KKIAGKEKKALPLARRTAEDR). Composition is skewed to acidic residues over residues 27 to 45 (EPDSDVEGSSDEAPSEEEG), 53 to 77 (DTEEEEEDEEIEEGSEPGSDDDSDA), and 117 to 127 (EDGSDDDEEKE). Basic and acidic residues-rich tracts occupy residues 128–142 (EPNWKTEIEKGMKAK) and 165–183 (RRRDFLANEPAKPKSRDPR). Residues 212-274 (DYQEDEMKQL…KKKEKELIKQ (63 aa)) adopt a coiled-coil conformation. Positions 315–332 (AGKEKKALPLARRTAEDR) are enriched in basic and acidic residues.

Belongs to the RRP36 family. Associates with 90S and pre-40S pre-ribosomal particles.

The protein localises to the nucleus. Its subcellular location is the nucleolus. Component of the 90S pre-ribosome involved in the maturation of rRNAs. Required for early cleavages of the pre-RNAs in the 40S ribosomal subunit maturation pathway. This is rRNA biogenesis protein rrp-36 (rrp-36) from Neurospora crassa (strain ATCC 24698 / 74-OR23-1A / CBS 708.71 / DSM 1257 / FGSC 987).